The chain runs to 590 residues: Aspartate--tRNA(Asp/Asn) ligase (590 aa).

Glu176 serves as a coordination point for L-aspartate. Residues 200–203 form an aspartate region; sequence QLFK. L-aspartate is bound by residues Arg222 and His451. 222-224 lines the ATP pocket; the sequence is RDE. Position 485 (Glu485) interacts with ATP. L-aspartate is bound at residue Arg492. 537–540 contacts ATP; the sequence is GIDR.

This sequence belongs to the class-II aminoacyl-tRNA synthetase family. Type 1 subfamily. Homodimer.

The protein localises to the cytoplasm. The catalysed reaction is tRNA(Asx) + L-aspartate + ATP = L-aspartyl-tRNA(Asx) + AMP + diphosphate. Its function is as follows. Aspartyl-tRNA synthetase with relaxed tRNA specificity since it is able to aspartylate not only its cognate tRNA(Asp) but also tRNA(Asn). Reaction proceeds in two steps: L-aspartate is first activated by ATP to form Asp-AMP and then transferred to the acceptor end of tRNA(Asp/Asn). This is Aspartate--tRNA(Asp/Asn) ligase from Ehrlichia chaffeensis (strain ATCC CRL-10679 / Arkansas).